A 126-amino-acid polypeptide reads, in one-letter code: 13 kDa ribonucleoprotein-associated protein (126 aa).

This sequence belongs to the eukaryotic ribosomal protein eL8 family. In terms of assembly, component of the U3 snoRNP particle. Binds to the C'/D and B/C motifs in U3 snoRNA. Component of the 25S U4/U6.U5 tri-snRNP particle, a subcomplex of the spliceosome. Binds to the 5' stem-loop of U4 snRNA.

Its subcellular location is the nucleus. It is found in the nucleolus. In terms of biological role, common component of the spliceosome and rRNA processing machinery. In association with the spliceosomal U4/U6.U5 tri-snRNP particle, required for splicing of pre-mRNA. In association with box C/D snoRNPs, required for processing of pre-ribosomal RNA (rRNA) and site-specific 2'-O-methylation of substrate RNAs. Essential for the accumulation and stability of U4 snRNA, U6 snRNA, and box C/D snoRNAs. In Yarrowia lipolytica (strain CLIB 122 / E 150) (Yeast), this protein is 13 kDa ribonucleoprotein-associated protein (SNU13).